Consider the following 41-residue polypeptide: Large ribosomal subunit protein bL36B (41 aa).

It belongs to the bacterial ribosomal protein bL36 family.

The protein is Large ribosomal subunit protein bL36B of Actinobacillus pleuropneumoniae serotype 5b (strain L20).